We begin with the raw amino-acid sequence, 89 residues long: Small ribosomal subunit protein uS15 (89 aa).

This sequence belongs to the universal ribosomal protein uS15 family. In terms of assembly, part of the 30S ribosomal subunit. Forms a bridge to the 50S subunit in the 70S ribosome, contacting the 23S rRNA.

In terms of biological role, one of the primary rRNA binding proteins, it binds directly to 16S rRNA where it helps nucleate assembly of the platform of the 30S subunit by binding and bridging several RNA helices of the 16S rRNA. Forms an intersubunit bridge (bridge B4) with the 23S rRNA of the 50S subunit in the ribosome. The chain is Small ribosomal subunit protein uS15 from Hyphomonas neptunium (strain ATCC 15444).